The chain runs to 827 residues: Copper-transporting ATPase 2 (827 aa).

2 HMA domains span residues Val-15 to Arg-80 and Ala-82 to Arg-148. Cu cation contacts are provided by Cys-26, Cys-29, Cys-93, and Cys-96. Helical transmembrane passes span Val-174–Ile-194, Asn-210–Phe-230, Ser-246–Pro-266, Ser-271–Gly-291, Gly-430–Phe-450, and Phe-458–Ala-478. Asp-515 (4-aspartylphosphate intermediate) is an active-site residue. Mg(2+)-binding residues include Asp-714 and Asp-718. 2 consecutive transmembrane segments (helical) span residues Asn-771–Val-793 and Leu-797–Leu-819.

This sequence belongs to the cation transport ATPase (P-type) (TC 3.A.3) family. Type IB subfamily.

The protein localises to the cell membrane. It catalyses the reaction Cu(2+)(in) + ATP + H2O = Cu(2+)(out) + ADP + phosphate + H(+). Its function is as follows. Involved in copper transport. This is Copper-transporting ATPase 2 (actP2) from Rhizobium meliloti (strain 1021) (Ensifer meliloti).